We begin with the raw amino-acid sequence, 423 residues long: Putative competence-damage inducible protein (423 aa).

It belongs to the CinA family.

The chain is Putative competence-damage inducible protein from Streptococcus pyogenes serotype M12 (strain MGAS2096).